Reading from the N-terminus, the 390-residue chain is GTPase Obg (390 aa).

Positions 1–159 (MKFVDEATIL…RDLQLELMLL (159 aa)) constitute an Obg domain. The interval 127–146 (NTRFKSSVNRTPRQKTMGTP) is disordered. The segment covering 129 to 143 (RFKSSVNRTPRQKTM) has biased composition (polar residues). In terms of domain architecture, OBG-type G spans 160-333 (ADVGMLGMPN…LCWDVMHFII (174 aa)). GTP is bound by residues 166-173 (GMPNAGKS), 191-195 (FTTLV), 213-216 (DIPG), 283-286 (NKID), and 314-316 (SAA). Mg(2+) contacts are provided by serine 173 and threonine 193. Residues 364–384 (MEAEAEEEWDDDWDEDDDEGV) are compositionally biased toward acidic residues. Positions 364 to 390 (MEAEAEEEWDDDWDEDDDEGVEIVYQR) are disordered.

The protein belongs to the TRAFAC class OBG-HflX-like GTPase superfamily. OBG GTPase family. In terms of assembly, monomer. The cofactor is Mg(2+).

The protein localises to the cytoplasm. In terms of biological role, an essential GTPase which binds GTP, GDP and possibly (p)ppGpp with moderate affinity, with high nucleotide exchange rates and a fairly low GTP hydrolysis rate. Plays a role in control of the cell cycle, stress response, ribosome biogenesis and in those bacteria that undergo differentiation, in morphogenesis control. The sequence is that of GTPase Obg from Cronobacter sakazakii (strain ATCC BAA-894) (Enterobacter sakazakii).